Reading from the N-terminus, the 881-residue chain is Valine--tRNA ligase (881 aa).

A 'HIGH' region motif is present at residues 49–59 (PNVTGKLHLGH). A 'KMSKS' region motif is present at residues 526–530 (KMSKS). Residue lysine 529 participates in ATP binding. Residues 810–881 (LADLINLDEE…VRQRLADLEK (72 aa)) are a coiled coil.

The protein belongs to the class-I aminoacyl-tRNA synthetase family. ValS type 1 subfamily. Monomer.

The protein resides in the cytoplasm. It carries out the reaction tRNA(Val) + L-valine + ATP = L-valyl-tRNA(Val) + AMP + diphosphate. Its function is as follows. Catalyzes the attachment of valine to tRNA(Val). As ValRS can inadvertently accommodate and process structurally similar amino acids such as threonine, to avoid such errors, it has a 'posttransfer' editing activity that hydrolyzes mischarged Thr-tRNA(Val) in a tRNA-dependent manner. The polypeptide is Valine--tRNA ligase (Bacillus anthracis).